The primary structure comprises 258 residues: Small ribosomal subunit protein uS2 (258 aa).

The interval 234–258 (ETANAEEAMQKAAAVEAAAEAAPAQ) is disordered. The segment covering 236–258 (ANAEEAMQKAAAVEAAAEAAPAQ) has biased composition (low complexity).

This sequence belongs to the universal ribosomal protein uS2 family.

This chain is Small ribosomal subunit protein uS2, found in Desulfovibrio desulfuricans (strain ATCC 27774 / DSM 6949 / MB).